We begin with the raw amino-acid sequence, 103 residues long: Cell division protein FtsB (103 aa).

The Cytoplasmic portion of the chain corresponds to 1-3 (MGK). The helical transmembrane segment at 4–21 (LTLLLLAILVWLQYSLWF) threads the bilayer. Topologically, residues 22–103 (GKNGIHDYTR…RAQSAGQNNR (82 aa)) are periplasmic. Residues 31–71 (RVNDDVAAQQATNAKLKARNDQLFAEIDDLNGGQEALEERA) are a coiled coil.

This sequence belongs to the FtsB family. Part of a complex composed of FtsB, FtsL and FtsQ.

The protein localises to the cell inner membrane. Its function is as follows. Essential cell division protein. May link together the upstream cell division proteins, which are predominantly cytoplasmic, with the downstream cell division proteins, which are predominantly periplasmic. In Escherichia coli O157:H7, this protein is Cell division protein FtsB.